A 288-amino-acid chain; its full sequence is 33 kDa chaperonin (288 aa).

Intrachain disulfides connect cysteine 233-cysteine 235 and cysteine 267-cysteine 270.

It belongs to the HSP33 family. In terms of processing, under oxidizing conditions two disulfide bonds are formed involving the reactive cysteines. Under reducing conditions zinc is bound to the reactive cysteines and the protein is inactive.

It localises to the cytoplasm. Redox regulated molecular chaperone. Protects both thermally unfolding and oxidatively damaged proteins from irreversible aggregation. Plays an important role in the bacterial defense system toward oxidative stress. This Pasteurella multocida (strain Pm70) protein is 33 kDa chaperonin.